Consider the following 1043-residue polypeptide: BAG family molecular chaperone regulator 6 (1043 aa).

5 disordered regions span residues 253-294 (KEEL…GKTV), 311-331 (DVKE…PYPI), 343-366 (VEAS…SDLH), 410-500 (NIPV…AESR), and 533-566 (SVES…KKSF). Composition is skewed to basic and acidic residues over residues 311–324 (DVKE…KEEP), 343–357 (VEAS…EGRN), 416–443 (SENH…KKEQ), and 478–487 (KRMEKSKETK). Over residues 534–543 (VESNSNLQEE) the composition is skewed to polar residues. A compositionally biased stretch (basic and acidic residues) spans 550-566 (KPCEAKENREQPAKKSF). In terms of domain architecture, IQ spans 568–597 (EEEAARIIQSMYRGYDVRRWEPIKKLKEIA). Positions 595-672 (EIATVREQMG…SIQDKLDSLK (78 aa)) constitute a BAG domain. Over residues 724 to 741 (SPEEHPMSVLNRTDEKQA) the composition is skewed to basic and acidic residues. 4 disordered regions span residues 724-749 (SPEE…ETEE), 764-799 (ATEN…GNGM), 817-975 (EPIN…ISKE), and 1015-1043 (EKKL…DAVL). The span at 840 to 852 (ASEVSEAETNSSE) shows a compositional bias: low complexity. The span at 853-871 (NENRKGEDDIVLHSEKNVE) shows a compositional bias: basic and acidic residues. Composition is skewed to polar residues over residues 885–899 (QPLS…TREG) and 919–932 (SPNN…QTSE). A compositionally biased stretch (basic and acidic residues) spans 934-951 (QDEKEQSPETEVIVKEQP). Residues 971 to 1024 (GISKETKKLMEENQRFKETMETLVKAGREQLEVISKLTSRVKSLEKKLSHKKKT) are a coiled coil. Over residues 1018–1031 (LSHKKKTQIRRRAS) the composition is skewed to basic residues. Residues 1034–1043 (MSVSPTDAVL) show a composition bias toward polar residues.

As to quaternary structure, binds to the ATPase domain of HSP70/HSC70 chaperones. Interacts with calmodulins CAM1, CAM2, CAM3, CAM4, CAM6 and CAM7. Interacts with BAGP1 and APCB1. As to expression, detected in stems, leaves, flowers and roots.

Co-chaperone that regulates diverse cellular pathways, such as programmed cell death and stress responses. Involved in plant basal resistance. Involved in basal heat response through the regulation of the heat induced small HSP (sHSP) transcriptional cascade. In terms of biological role, induces autophagy. The polypeptide is BAG family molecular chaperone regulator 6 (Arabidopsis thaliana (Mouse-ear cress)).